Here is a 141-residue protein sequence, read N- to C-terminus: Putative antiporter subunit mnhB2 (141 aa).

4 consecutive transmembrane segments (helical) span residues 10–30 (TVTK…FFAG), 35–55 (GGGF…FLAF), 70–90 (ILMI…MFFG), and 114–134 (ITLF…TVML).

Belongs to the CPA3 antiporters (TC 2.A.63) subunit B family. As to quaternary structure, may form a heterooligomeric complex that consists of seven subunits: mnhA2, mnhB2, mnhC2, mnhD2, mnhE2, mnhF2 and mnhG2.

It is found in the cell membrane. This chain is Putative antiporter subunit mnhB2 (mnhB2), found in Staphylococcus aureus (strain Mu3 / ATCC 700698).